The primary structure comprises 1378 residues: DNA-directed RNA polymerase subunit beta (1378 aa).

It belongs to the RNA polymerase beta chain family. As to quaternary structure, the RNAP catalytic core consists of 2 alpha, 1 beta, 1 beta' and 1 omega subunit. When a sigma factor is associated with the core the holoenzyme is formed, which can initiate transcription.

It carries out the reaction RNA(n) + a ribonucleoside 5'-triphosphate = RNA(n+1) + diphosphate. In terms of biological role, DNA-dependent RNA polymerase catalyzes the transcription of DNA into RNA using the four ribonucleoside triphosphates as substrates. This Mesorhizobium japonicum (strain LMG 29417 / CECT 9101 / MAFF 303099) (Mesorhizobium loti (strain MAFF 303099)) protein is DNA-directed RNA polymerase subunit beta.